A 352-amino-acid chain; its full sequence is Peptide chain release factor 1 (352 aa).

The residue at position 233 (glutamine 233) is an N5-methylglutamine. The tract at residues 288 to 309 (NAKDRKEQVGSGDRSERIRTYN) is disordered. Residues 289–306 (AKDRKEQVGSGDRSERIR) are compositionally biased toward basic and acidic residues.

It belongs to the prokaryotic/mitochondrial release factor family. Post-translationally, methylated by PrmC. Methylation increases the termination efficiency of RF1.

Its subcellular location is the cytoplasm. Its function is as follows. Peptide chain release factor 1 directs the termination of translation in response to the peptide chain termination codons UAG and UAA. This is Peptide chain release factor 1 from Helicobacter pylori (strain Shi470).